The following is a 130-amino-acid chain: Guanyl-specific ribonuclease T1 (130 aa).

The signal sequence occupies residues 1 to 26 (MMYSKLLTLTTLLLPTALALPSLVER). Disulfide bonds link cysteine 28/cysteine 36 and cysteine 32/cysteine 129. Histidine 66 is an active-site residue. Glutamate 84 acts as the Proton acceptor in catalysis. The active-site Proton donor is histidine 118.

Belongs to the ribonuclease N1/T1 family. Monomer.

The catalysed reaction is [RNA] containing guanosine + H2O = an [RNA fragment]-3'-guanosine-3'-phosphate + a 5'-hydroxy-ribonucleotide-3'-[RNA fragment].. This is Guanyl-specific ribonuclease T1 (rntA) from Aspergillus oryzae (strain ATCC 42149 / RIB 40) (Yellow koji mold).